The sequence spans 337 residues: Schlafen family member 1 (337 aa).

The segment at 147–166 (AGGRSPSARPSDRPGDDTQE) is disordered. Over residues 156-166 (PSDRPGDDTQE) the composition is skewed to basic and acidic residues.

Belongs to the Schlafen family. Interacts with DNAJB6; promoting nuclear translocation and ability to promote cell-cycle arrest. As to expression, mainly expressed in the thymus, lymph node and spleen. Specifically expressed in T-lineage cells, but not in B-cells. Strongly up-regulated during the differentiation from CD4(+)CD8(+) double-positive (DP) to CD4(+) or CD8(+) single-positive (SP) thymocytes. Highly expressed in quiescent single-positive thymocytes and T-cells. The expression substantially decreases after TCR (T-cell receptor)-mediated activation.

It localises to the cytoplasm. The protein resides in the nucleus. In terms of biological role, protein expressed in resting T-cells, which is required for maintaining T-cells in the quiescent state. Acts by promoting cell-cycle arrest of T-cells through inhibiting the expression of cyclin-D1 (CCND1). The chain is Schlafen family member 1 from Mus musculus (Mouse).